A 338-amino-acid chain; its full sequence is Mitoferrin-1 (338 aa).

The disordered stretch occupies residues 1 to 42 (MELRSGSVGSQAVARRMDGDSRDGGGGKDATGSEDYENLPTS). The span at 15 to 26 (RRMDGDSRDGGG) shows a compositional bias: basic and acidic residues. 3 Solcar repeats span residues 43–131 (ASVS…MKRT), 141–225 (NSHL…LQEQ), and 232–326 (YNPQ…FKYF). A run of 6 helical transmembrane segments spans residues 45 to 64 (VSTHMTAGAMAGILEHSVMY), 106 to 125 (GVNVMIMGAGPAHAMYFACY), 143 to 162 (HLANGIAGSMATLLHDAVMN), 200 to 219 (SYTTQLTMNIPFQSIHFITY), 234 to 253 (PQSHIISGGLAGALAAAATT), and 301 to 320 (GIQARVIYQMPSTAISWSVY).

Belongs to the mitochondrial carrier (TC 2.A.29) family. In terms of assembly, interacts with ACB10; this interaction stabilizes SLC25A37 and enhances the function of SLC25A37 to import mitochondrial iron during erythroid differentiation.

It is found in the mitochondrion inner membrane. It catalyses the reaction Fe(2+)(in) = Fe(2+)(out). Its function is as follows. Mitochondrial iron transporter that specifically mediates iron uptake in developing erythroid cells, thereby playing an essential role in heme biosynthesis. In Homo sapiens (Human), this protein is Mitoferrin-1 (SLC25A37).